The primary structure comprises 293 residues: 33 kDa chaperonin (293 aa).

Cystine bridges form between C235-C237 and C267-C270.

The protein belongs to the HSP33 family. Under oxidizing conditions two disulfide bonds are formed involving the reactive cysteines. Under reducing conditions zinc is bound to the reactive cysteines and the protein is inactive.

It localises to the cytoplasm. Its function is as follows. Redox regulated molecular chaperone. Protects both thermally unfolding and oxidatively damaged proteins from irreversible aggregation. Plays an important role in the bacterial defense system toward oxidative stress. This chain is 33 kDa chaperonin, found in Deinococcus radiodurans (strain ATCC 13939 / DSM 20539 / JCM 16871 / CCUG 27074 / LMG 4051 / NBRC 15346 / NCIMB 9279 / VKM B-1422 / R1).